A 213-amino-acid chain; its full sequence is Sclerostin (213 aa).

The signal sequence occupies residues 1–28 (MQLSLAPCLACLLVHAAFVAVESQGWQA). The N-linked (GlcNAc...) asparagine glycan is linked to Asn53. Disulfide bonds link Cys80–Cys134, Cys94–Cys148, Cys105–Cys165, and Cys109–Cys167. Residues 82–172 (ELHYTRFVTD…ASCKCKRLTR (91 aa)) enclose the CTCK domain. N-linked (GlcNAc...) asparagine glycosylation is present at Asn175. Residues 178–213 (ELKDFGPETARPQKGRKPRPRARGAKANQAELENAY) form a disordered region. Positions 190-201 (QKGRKPRPRARG) are enriched in basic residues.

It belongs to the sclerostin family. Interacts with LRP4 (via the extracellular domain); the interaction facilitates the inhibition of Wnt signaling. Interacts with LRP5 (via the first two YWTD-EGF repeat domains); the interaction inhibits Wnt-mediated signaling. Interacts with LRP6.

It localises to the secreted. Its function is as follows. Negative regulator of bone growth that acts through inhibition of Wnt signaling and bone formation. This Rattus norvegicus (Rat) protein is Sclerostin.